Reading from the N-terminus, the 383-residue chain is MHC class I polypeptide-related sequence A (383 aa).

The signal sequence occupies residues 1 to 23 (MGLGPVFLLLAGIFPFAPPGAAA). The Extracellular portion of the chain corresponds to 24–307 (EPHSLRYNLT…GKVLVLQSHW (284 aa)). The N-linked (GlcNAc...) asparagine glycan is linked to N31. Residues C59 and C64 are joined by a disulfide bond. A glycan (N-linked (GlcNAc...) asparagine) is linked at N79. A disulfide bond links C119 and C187. Residues 207 to 296 (PMVNVTRSEA…SGNHSTHPVP (90 aa)) form the Ig-like C1-type domain. N210, N220, and N261 each carry an N-linked (GlcNAc...) asparagine glycan. The cysteines at positions 225 and 282 are disulfide-linked. Residues 308–328 (QTFHVSAVAAAAIFVIIIFYV) form a helical membrane-spanning segment. At 329–383 (RCCKKKTSAAEGPELVSLQVLDQHPVGTSDHRDATQLGFQPLMSDLGSTGSTEGA) the chain is on the cytoplasmic side. Residues C330 and C331 are each lipidated (S-palmitoyl cysteine).

This sequence belongs to the MHC class I family. MIC subfamily. As to quaternary structure, unlike classical MHC class I molecules, does not form a heterodimer with beta-2-microglobulin. Binds as a monomer to a KLRK1/NKG2D homodimer. KLRK1 forms a complex with HCST/DAP10 in which KLRK1 binds MICA while HCST acts as an adapter molecule which enables signal transduction. Interacts with PDIA6 on the surface of tumor cells, leading to disulfide bond reduction which is required for release of MICA from tumor cells. In terms of assembly, (Microbial infection) Interacts with human cytomegalovirus/HHV-5 protein UL142. N-glycosylated. Glycosylation is not essential for interaction with KLRK1/NKG2D but enhances complex formation. In terms of processing, proteolytically cleaved and released from the cell surface of tumor cells which impairs KLRK1/NKG2D expression and T-cell activation. Post-translationally, palmitoylated on cysteine residues in the cytoplasmic tail leading to its association with membrane microdomains enriched in cholesterol. N-glycosylation is necessary for cell surface expression. In terms of processing, (Microbial infection) Ubiquitinated by human herpesvirus 8 protein K5, leading to degradation. As to expression, widely expressed with the exception of the central nervous system where it is absent. Expressed predominantly in gastric epithelium and also in monocytes, keratinocytes, endothelial cells, fibroblasts and in the outer layer of Hassal's corpuscles within the medulla of normal thymus. In skin, expressed mainly in the keratin layers, basal cells, ducts and follicles. Also expressed in many, but not all, epithelial tumors of lung, breast, kidney, ovary, prostate and colon. In thyomas, overexpressed in cortical and medullar epithelial cells. Tumors expressing MICA display increased levels of gamma delta T-cells.

The protein resides in the cell membrane. It localises to the cytoplasm. In terms of biological role, widely expressed membrane-bound protein which acts as a ligand to stimulate an activating receptor KLRK1/NKG2D, expressed on the surface of essentially all human natural killer (NK), gammadelta T and CD8 alphabeta T-cells. Up-regulated in stressed conditions, such as viral and bacterial infections or DNA damage response, serves as signal of cellular stress, and engagement of KLRK1/NKG2D by MICA triggers NK-cells resulting in a range of immune effector functions, such as cytotoxicity and cytokine production. The chain is MHC class I polypeptide-related sequence A from Homo sapiens (Human).